Consider the following 336-residue polypeptide: Glyceraldehyde-3-phosphate dehydrogenase (336 aa).

Residues 12 to 13, Asp-35, Arg-79, and Ser-121 contribute to the NAD(+) site; that span reads RI. Residues 152–154 and Thr-183 contribute to the D-glyceraldehyde 3-phosphate site; that span reads SCT. Cys-153 functions as the Nucleophile in the catalytic mechanism. Asn-184 provides a ligand contact to NAD(+). Residues Arg-198, 211–212, and Arg-234 each bind D-glyceraldehyde 3-phosphate; that span reads TG. Asn-317 is an NAD(+) binding site.

Belongs to the glyceraldehyde-3-phosphate dehydrogenase family. In terms of assembly, homotetramer.

It is found in the cytoplasm. It catalyses the reaction D-glyceraldehyde 3-phosphate + phosphate + NAD(+) = (2R)-3-phospho-glyceroyl phosphate + NADH + H(+). It functions in the pathway carbohydrate degradation; glycolysis; pyruvate from D-glyceraldehyde 3-phosphate: step 1/5. Its activity is regulated as follows. Resistant to pentalenolactone. Catalyzes the oxidative phosphorylation of glyceraldehyde 3-phosphate (G3P) to 1,3-bisphosphoglycerate (BPG) using the cofactor NAD. The first reaction step involves the formation of a hemiacetal intermediate between G3P and a cysteine residue, and this hemiacetal intermediate is then oxidized to a thioester, with concomitant reduction of NAD to NADH. The reduced NADH is then exchanged with the second NAD, and the thioester is attacked by a nucleophilic inorganic phosphate to produce BPG. The sequence is that of Glyceraldehyde-3-phosphate dehydrogenase (gap) from Streptomyces coelicolor (strain ATCC BAA-471 / A3(2) / M145).